A 788-amino-acid polypeptide reads, in one-letter code: uncharacterized protein (788 aa).

The region spanning 485–693 is the Adrift-type SAM-dependent 2'-O-MTase domain; that stretch reads EMITTAWIKL…IYIVLKSYKG (209 aa). Residues Gly521 and Asp604 each coordinate S-adenosyl-L-methionine. The active-site Proton acceptor is the Lys645.

This is an uncharacterized protein from Acanthamoeba polyphaga (Amoeba).